The sequence spans 580 residues: Purine permease (580 aa).

Helical transmembrane passes span 68–88 (PLVL…AGVI), 107–127 (SQYL…VQMF), 136–156 (YYVG…ITVA), 184–204 (YGAL…LSFM), 211–231 (ALFP…SLIG), 263–283 (LPWG…TIIL), 294–314 (SCAV…CGYF), 385–405 (LGNG…MSVF), 426–446 (CCFF…LVAI), 447–467 (PSSV…ISGV), 481–501 (FILT…DWFS), and 522–542 (LVMA…NLIL).

Belongs to the nucleobase:cation symporter-2 (NCS2) (TC 2.A.40) family.

It is found in the membrane. Its function is as follows. Able to transport with low efficiency all natural purines as well as purine analogs. The protein is Purine permease (uapC) of Emericella nidulans (strain FGSC A4 / ATCC 38163 / CBS 112.46 / NRRL 194 / M139) (Aspergillus nidulans).